The sequence spans 85 residues: Cell division topological specificity factor (85 aa).

Belongs to the MinE family.

Prevents the cell division inhibition by proteins MinC and MinD at internal division sites while permitting inhibition at polar sites. This ensures cell division at the proper site by restricting the formation of a division septum at the midpoint of the long axis of the cell. In Shewanella amazonensis (strain ATCC BAA-1098 / SB2B), this protein is Cell division topological specificity factor.